An 880-amino-acid polypeptide reads, in one-letter code: Alanine--tRNA ligase (880 aa).

Zn(2+) is bound by residues His-565, His-569, Cys-675, and His-679.

It belongs to the class-II aminoacyl-tRNA synthetase family. Requires Zn(2+) as cofactor.

Its subcellular location is the cytoplasm. The enzyme catalyses tRNA(Ala) + L-alanine + ATP = L-alanyl-tRNA(Ala) + AMP + diphosphate. Catalyzes the attachment of alanine to tRNA(Ala) in a two-step reaction: alanine is first activated by ATP to form Ala-AMP and then transferred to the acceptor end of tRNA(Ala). Also edits incorrectly charged Ser-tRNA(Ala) and Gly-tRNA(Ala) via its editing domain. In Granulibacter bethesdensis (strain ATCC BAA-1260 / CGDNIH1), this protein is Alanine--tRNA ligase.